Consider the following 404-residue polypeptide: D-galactonate dehydratase family member PC1_0802 (404 aa).

Positions 37 and 122 each coordinate substrate. Residue Y159 is the Proton donor/acceptor of the active site. A Mg(2+)-binding site is contributed by D212. The active-site Proton donor/acceptor is H214. E238 and E264 together coordinate Mg(2+). E264, R285, H314, D318, and E341 together coordinate substrate.

It belongs to the mandelate racemase/muconate lactonizing enzyme family. GalD subfamily. Requires Mg(2+) as cofactor.

It catalyses the reaction D-mannonate = 2-dehydro-3-deoxy-D-gluconate + H2O. In terms of biological role, has low D-mannonate dehydratase activity (in vitro), suggesting that this is not a physiological substrate and that it has no significant role in D-mannonate degradation in vivo. Has no detectable activity with a panel of 70 other acid sugars (in vitro). The protein is D-galactonate dehydratase family member PC1_0802 of Pectobacterium carotovorum subsp. carotovorum (strain PC1).